The primary structure comprises 155 residues: Ribosomal RNA large subunit methyltransferase H (155 aa).

Residues leucine 72, glycine 103, and 122-127 (LSPLTL) contribute to the S-adenosyl-L-methionine site.

Belongs to the RNA methyltransferase RlmH family. As to quaternary structure, homodimer.

It localises to the cytoplasm. The enzyme catalyses pseudouridine(1915) in 23S rRNA + S-adenosyl-L-methionine = N(3)-methylpseudouridine(1915) in 23S rRNA + S-adenosyl-L-homocysteine + H(+). Specifically methylates the pseudouridine at position 1915 (m3Psi1915) in 23S rRNA. This chain is Ribosomal RNA large subunit methyltransferase H, found in Haemophilus ducreyi (strain 35000HP / ATCC 700724).